Here is a 208-residue protein sequence, read N- to C-terminus: ATP-dependent Clp protease proteolytic subunit (208 aa).

Ser-105 functions as the Nucleophile in the catalytic mechanism. His-130 is an active-site residue.

It belongs to the peptidase S14 family. As to quaternary structure, fourteen ClpP subunits assemble into 2 heptameric rings which stack back to back to give a disk-like structure with a central cavity, resembling the structure of eukaryotic proteasomes.

It localises to the cytoplasm. The catalysed reaction is Hydrolysis of proteins to small peptides in the presence of ATP and magnesium. alpha-casein is the usual test substrate. In the absence of ATP, only oligopeptides shorter than five residues are hydrolyzed (such as succinyl-Leu-Tyr-|-NHMec, and Leu-Tyr-Leu-|-Tyr-Trp, in which cleavage of the -Tyr-|-Leu- and -Tyr-|-Trp bonds also occurs).. Cleaves peptides in various proteins in a process that requires ATP hydrolysis. Has a chymotrypsin-like activity. Plays a major role in the degradation of misfolded proteins. The sequence is that of ATP-dependent Clp protease proteolytic subunit from Xanthomonas campestris pv. campestris (strain 8004).